A 721-amino-acid polypeptide reads, in one-letter code: Catalase-peroxidase 1 (721 aa).

Residues 98-223 constitute a cross-link (tryptophyl-tyrosyl-methioninium (Trp-Tyr) (with M-249)); that stretch reads WHAAGSYRVA…LAAVQMGLIY (126 aa). The active-site Proton acceptor is histidine 99. Positions 223–249 form a cross-link, tryptophyl-tyrosyl-methioninium (Tyr-Met) (with W-98); that stretch reads YVNPEGVNGQPDPLRTAQDVRVTFGRM. Histidine 264 serves as a coordination point for heme b.

The protein belongs to the peroxidase family. Peroxidase/catalase subfamily. Homodimer or homotetramer. The cofactor is heme b. Post-translationally, formation of the three residue Trp-Tyr-Met cross-link is important for the catalase, but not the peroxidase activity of the enzyme.

The enzyme catalyses H2O2 + AH2 = A + 2 H2O. It carries out the reaction 2 H2O2 = O2 + 2 H2O. Bifunctional enzyme with both catalase and broad-spectrum peroxidase activity. The sequence is that of Catalase-peroxidase 1 from Legionella pneumophila (strain Corby).